The sequence spans 149 residues: UPF0756 membrane protein BBR47_12340 (149 aa).

The next 4 helical transmembrane spans lie at 6–26 (IILL…LVYA), 48–68 (PMFH…IAKG), 86–106 (IAIL…SILP), and 120–140 (LLAV…AGCI).

It belongs to the UPF0756 family.

Its subcellular location is the cell membrane. The protein is UPF0756 membrane protein BBR47_12340 of Brevibacillus brevis (strain 47 / JCM 6285 / NBRC 100599).